The primary structure comprises 199 residues: Inner membrane protein E199L (199 aa).

The N-linked (GlcNAc...) asparagine; by host glycan is linked to Asn-131. Residues 150 to 170 (INVMNHPFLTLILIILILVII) traverse the membrane as a helical segment.

The protein belongs to the asfivirus E199L family. In terms of assembly, interacts with host PYCR2; this interaction results in autophagy activation.

Its subcellular location is the virion membrane. It is found in the host membrane. Functionally, essential for viral fusion with host endosomal membrane and core release. Not required for virus morphogenesis and egress. Induces complete autophagy through the interaction with and down-regulation of host PYCR2. This is Inner membrane protein E199L from African swine fever virus (isolate Pig/Kenya/KEN-50/1950) (ASFV).